Consider the following 163-residue polypeptide: MLRKLILITVATVFFACQLLVNPVSALELDEESRTVQYNEQGDEVVISIKEAERGKRLFNDTCAQCHLGGVTKTNPNVGLSLEALERAEPPRDNIAGLIDYMKNPTTYDGEIDIKEIHPNTVRSDILPERRNLTDDDLEAIAAHILSQPKSPRKQWGDGKVYN.

An N-terminal signal peptide occupies residues 1-26 (MLRKLILITVATVFFACQLLVNPVSA). Cys-63, Cys-66, His-67, and His-118 together coordinate heme c.

This sequence belongs to the cytochrome c family. PsbV subfamily. PSII is composed of 1 copy each of membrane proteins PsbA, PsbB, PsbC, PsbD, PsbE, PsbF, PsbH, PsbI, PsbJ, PsbK, PsbL, PsbM, PsbT, PsbX, PsbY, PsbZ, Psb30/Ycf12, peripheral proteins PsbO, CyanoQ (PsbQ), PsbU, PsbV and a large number of cofactors. It forms dimeric complexes. Heme c is required as a cofactor.

Its subcellular location is the cellular thylakoid membrane. One of the extrinsic, lumenal subunits of photosystem II (PSII). PSII is a light-driven water plastoquinone oxidoreductase, using light energy to abstract electrons from H(2)O, generating a proton gradient subsequently used for ATP formation. The extrinsic proteins stabilize the structure of photosystem II oxygen-evolving complex (OEC), the ion environment of oxygen evolution and protect the OEC against heat-induced inactivation. Low-potential cytochrome c that plays a role in the OEC of PSII. The sequence is that of Photosystem II extrinsic protein V from Aphanothece halophytica.